Here is a 298-residue protein sequence, read N- to C-terminus: MVQRITIAPQGPEFSRFVMGYWRLMDWNMSARQLVSFIEEHLDLGVTTVDHADIYGGYQCEAAFGEALKLAPHLRERMEIVSKCGIATTAREENVIGHYITDRDHIIKSAEQSLINLATDHLDLLLIHRPDPLMDADEVADAFKHLHQSGKVRHFGVSNFTPAQFALLQSRLPFTLATNQVEISPVHQPLLLDGTLDQLQQLRVRPMAWSCLGGGRLFNDDYFQPLRDELAVVAEELNAGSIEQVVYAWVLRLPSQPLPIIGSGKIERVRAAVEAETLKMTRQQWFRIRKAALGYDVP.

The active-site Proton donor is tyrosine 55. NADP(+) is bound by residues 158 to 159, 209 to 220, and 263 to 264; these read SN, WSCLGGGRLFND, and SG.

This sequence belongs to the aldo/keto reductase family. Aldo/keto reductase 2 subfamily.

Its function is as follows. May function as oxidoreductase. The sequence is that of Oxidoreductase YdhF (ydhF) from Escherichia coli (strain K12).